Consider the following 95-residue polypeptide: Microcin E492 immunity protein (95 aa).

Helical transmembrane passes span 1 to 21 (MTLL…FCII), 35 to 55 (VIVL…TKVY), and 67 to 87 (YLFC…ILTI).

It belongs to the MceB microcin immunity protein family.

The protein localises to the cell inner membrane. Protect the producing cell against microcin E492. The sequence is that of Microcin E492 immunity protein from Klebsiella pneumoniae.